Here is a 369-residue protein sequence, read N- to C-terminus: DNA replication and repair protein RecF (369 aa).

Residue 30–37 (GPNGSGKT) coordinates ATP.

It belongs to the RecF family.

The protein resides in the cytoplasm. Its function is as follows. The RecF protein is involved in DNA metabolism; it is required for DNA replication and normal SOS inducibility. RecF binds preferentially to single-stranded, linear DNA. It also seems to bind ATP. This chain is DNA replication and repair protein RecF, found in Chlorobium luteolum (strain DSM 273 / BCRC 81028 / 2530) (Pelodictyon luteolum).